Consider the following 383-residue polypeptide: tRNA (guanine(26)-N(2))-dimethyltransferase (383 aa).

The 368-residue stretch at 4 to 371 (EIITEGRTPL…ASPEEFEAVL (368 aa)) folds into the Trm1 methyltransferase domain. Residues R38, R63, D80, D108, and A109 each contribute to the S-adenosyl-L-methionine site. Positions 243, 246, 258, and 261 each coordinate Zn(2+).

Belongs to the class I-like SAM-binding methyltransferase superfamily. Trm1 family.

The catalysed reaction is guanosine(26) in tRNA + 2 S-adenosyl-L-methionine = N(2)-dimethylguanosine(26) in tRNA + 2 S-adenosyl-L-homocysteine + 2 H(+). Functionally, dimethylates a single guanine residue at position 26 of a number of tRNAs using S-adenosyl-L-methionine as donor of the methyl groups. The chain is tRNA (guanine(26)-N(2))-dimethyltransferase from Methanopyrus kandleri (strain AV19 / DSM 6324 / JCM 9639 / NBRC 100938).